Here is a 71-residue protein sequence, read N- to C-terminus: Plasticin-DA1 (71 aa).

An N-terminal signal peptide occupies residues 1 to 22 (MAFLKKSLFLVLFLALVPLSIC). Residues 23–42 (EAEKREEENEEKQEDDDESE) constitute a propeptide that is removed on maturation. A disordered region spans residues 25-45 (EKREEENEEKQEDDDESEKKR). A compositionally biased stretch (acidic residues) spans 30 to 40 (ENEEKQEDDDE). Gly68 bears the Glycine amide mark. Residues 70 to 71 (ER) constitute a propeptide that is removed on maturation.

This sequence belongs to the frog skin active peptide (FSAP) family. Plasticin subfamily. In terms of tissue distribution, expressed by the skin glands.

The protein localises to the secreted. It localises to the target cell membrane. Functionally, neutral peptide with no antimicrobial activity. Does not permeate bacterial membranes. May act in synergy with cationic peptides by enhancing their activity. Has a moderate hemolytic activity. It interacts with zwitterionic phospholipids (DMPC) without perturbing either the interface or inside of the bilayer, whereas it causes little perturbations at the interface peptide-anionic vesicles (DMPG) as well as in the bilayer alkyl chains. This Agalychnis dacnicolor (Giant Mexican leaf frog) protein is Plasticin-DA1.